Reading from the N-terminus, the 105-residue chain is Ig lambda-1 chain C region (105 aa).

In terms of domain architecture, Ig-like spans 6-100 (PSVTLFPPSS…EGHTVEKSLS (95 aa)). The cysteines at positions 27 and 86 are disulfide-linked.

The sequence is that of Ig lambda-1 chain C region from Mus musculus (Mouse).